The sequence spans 396 residues: Acetate kinase (396 aa).

Position 8 (Asn-8) interacts with Mg(2+). Lys-15 contacts ATP. A substrate-binding site is contributed by Arg-89. Asp-146 serves as the catalytic Proton donor/acceptor. Residues 206 to 210, 283 to 285, and 331 to 335 contribute to the ATP site; these read HIGNG, DMR, and GVGEN. A Mg(2+)-binding site is contributed by Glu-383.

Belongs to the acetokinase family. Homodimer. The cofactor is Mg(2+). Mn(2+) is required as a cofactor.

It localises to the cytoplasm. It carries out the reaction acetate + ATP = acetyl phosphate + ADP. It functions in the pathway metabolic intermediate biosynthesis; acetyl-CoA biosynthesis; acetyl-CoA from acetate: step 1/2. In terms of biological role, catalyzes the formation of acetyl phosphate from acetate and ATP. Can also catalyze the reverse reaction. This Streptococcus pneumoniae (strain JJA) protein is Acetate kinase.